A 227-amino-acid chain; its full sequence is MAYPFQLGLQDATSPIMEELLHFHDHTLMIVFLISSLVLYIISLMLTTKLTHTSTMDAQEVETVWTILPAIILILIALPSLRILYMMDEINNPSLTVKTMGHQWYWSYEYTDYEDLNFDSYMIPTQELKPGELRLLEVDNRVVLPMEMTIRMLVSSEDVLHSWAVPSLGLKTDAIPGRLNQTTLMAMRPGLYYGQCSEICGSNHSFMPIVLEMVPLSYFETWSALMV.

At Met-1–Ser-14 the chain is on the mitochondrial intermembrane side. The helical transmembrane segment at Pro-15 to Met-45 threads the bilayer. Topologically, residues Leu-46–Gln-59 are mitochondrial matrix. A helical membrane pass occupies residues Glu-60–Met-87. The Mitochondrial intermembrane portion of the chain corresponds to Asp-88 to Val-227. Residues His-161, Cys-196, Glu-198, Cys-200, His-204, and Met-207 each coordinate Cu cation. Glu-198 is a Mg(2+) binding site. Phosphotyrosine is present on Tyr-218.

It belongs to the cytochrome c oxidase subunit 2 family. In terms of assembly, component of the cytochrome c oxidase (complex IV, CIV), a multisubunit enzyme composed of 14 subunits. The complex is composed of a catalytic core of 3 subunits MT-CO1, MT-CO2 and MT-CO3, encoded in the mitochondrial DNA, and 11 supernumerary subunits COX4I, COX5A, COX5B, COX6A, COX6B, COX6C, COX7A, COX7B, COX7C, COX8 and NDUFA4, which are encoded in the nuclear genome. The complex exists as a monomer or a dimer and forms supercomplexes (SCs) in the inner mitochondrial membrane with NADH-ubiquinone oxidoreductase (complex I, CI) and ubiquinol-cytochrome c oxidoreductase (cytochrome b-c1 complex, complex III, CIII), resulting in different assemblies (supercomplex SCI(1)III(2)IV(1) and megacomplex MCI(2)III(2)IV(2)). Found in a complex with TMEM177, COA6, COX18, COX20, SCO1 and SCO2. Interacts with TMEM177 in a COX20-dependent manner. Interacts with COX20. Interacts with COX16. The cofactor is Cu cation.

The protein resides in the mitochondrion inner membrane. The catalysed reaction is 4 Fe(II)-[cytochrome c] + O2 + 8 H(+)(in) = 4 Fe(III)-[cytochrome c] + 2 H2O + 4 H(+)(out). In terms of biological role, component of the cytochrome c oxidase, the last enzyme in the mitochondrial electron transport chain which drives oxidative phosphorylation. The respiratory chain contains 3 multisubunit complexes succinate dehydrogenase (complex II, CII), ubiquinol-cytochrome c oxidoreductase (cytochrome b-c1 complex, complex III, CIII) and cytochrome c oxidase (complex IV, CIV), that cooperate to transfer electrons derived from NADH and succinate to molecular oxygen, creating an electrochemical gradient over the inner membrane that drives transmembrane transport and the ATP synthase. Cytochrome c oxidase is the component of the respiratory chain that catalyzes the reduction of oxygen to water. Electrons originating from reduced cytochrome c in the intermembrane space (IMS) are transferred via the dinuclear copper A center (CU(A)) of subunit 2 and heme A of subunit 1 to the active site in subunit 1, a binuclear center (BNC) formed by heme A3 and copper B (CU(B)). The BNC reduces molecular oxygen to 2 water molecules using 4 electrons from cytochrome c in the IMS and 4 protons from the mitochondrial matrix. The polypeptide is Cytochrome c oxidase subunit 2 (MT-CO2) (Canis adustus (Side-striped jackal)).